Reading from the N-terminus, the 1014-residue chain is Poly [ADP-ribose] polymerase 1 (1014 aa).

Residue alanine 2 is modified to N-acetylalanine. Residues 9-93 (YRVEYAKSGR…KVKKTAEAGG (85 aa)) form a PARP-type 1 zinc finger. Residues cysteine 21 and cysteine 24 each contribute to the Zn(2+) site. Position 41 is a phosphoserine (serine 41). The Zn(2+) site is built by histidine 53 and cysteine 56. N6-acetyllysine is present on residues lysine 97 and lysine 105. A PARP-type 2 zinc finger spans residues 113-203 (FAAEYAKSNR…ALKKQLPGVK (91 aa)). Cysteine 125 and cysteine 128 together coordinate Zn(2+). Lysine 131 bears the N6-acetyllysine mark. Zn(2+) is bound by residues histidine 159 and cysteine 162. Serine 177, serine 179, and serine 185 each carry phosphoserine. A Glycyl lysine isopeptide (Lys-Gly) (interchain with G-Cter in SUMO2) cross-link involves residue lysine 192. The tract at residues 198 to 233 (QLPGVKSEGKRKGDEVDGVDEVAKKKSKKEKDKDSK) is disordered. Lysine 203 participates in a covalent cross-link: Glycyl lysine isopeptide (Lys-Gly) (interchain with G-Cter in SUMO1); alternate. Lysine 203 is covalently cross-linked (Glycyl lysine isopeptide (Lys-Gly) (interchain with G-Cter in SUMO2); alternate). Residues 204 to 233 (SEGKRKGDEVDGVDEVAKKKSKKEKDKDSK) show a composition bias toward basic and acidic residues. 2 consecutive short sequence motifs (nuclear localization signal) follow at residues 207 to 209 (KRK) and 221 to 226 (KKKSKK). The PADR1 zinc-binding domain occupies 225 to 359 (KKEKDKDSKL…VKKQDRIFPP (135 aa)). A Glycyl lysine isopeptide (Lys-Gly) (interchain with G-Cter in SUMO2) cross-link involves residue lysine 249. A phosphoserine mark is found at serine 274 and serine 277. The tract at residues 290–332 (GALLPCEECSGQLVFKSDAYYCTGDVTAWTKCMVKTQTPNRKE) is zinc ribbon. 4 residues coordinate Zn(2+): cysteine 295, cysteine 298, cysteine 311, and cysteine 321. The tract at residues 361–385 (TSASVAATPPPSTASAPAAVNSSAS) is disordered. Serine 364 bears the Phosphoserine mark. Threonine 368 bears the Phosphothreonine mark. Residues 373 to 524 (TASAPAAVNS…GINKSEKRMK (152 aa)) form an automodification domain region. Residues 385 to 476 (SADKPLSNMK…KSLQELFLAH (92 aa)) form the BRCT domain. Aspartate 387 bears the PolyADP-ribosyl aspartic acid mark. Residues glutamate 407, glutamate 413, glutamate 435, glutamate 437, glutamate 444, glutamate 445, glutamate 448, and glutamate 456 each carry the polyADP-ribosyl glutamic acid modification. Lysine 467 is covalently cross-linked (Glycyl lysine isopeptide (Lys-Gly) (interchain with G-Cter in SUMO2)). 2 positions are modified to polyADP-ribosyl glutamic acid: glutamate 471 and glutamate 484. Lysine 486 participates in a covalent cross-link: Glycyl lysine isopeptide (Lys-Gly) (interchain with G-Cter in SUMO1); alternate. Lysine 486 participates in a covalent cross-link: Glycyl lysine isopeptide (Lys-Gly) (interchain with G-Cter in SUMO2); alternate. PolyADP-ribosyl glutamic acid is present on residues glutamate 488 and glutamate 491. Residues serine 499, serine 504, and serine 507 each carry the ADP-ribosylserine modification. Lysine 512 is covalently cross-linked (Glycyl lysine isopeptide (Lys-Gly) (interchain with G-Cter in SUMO2)). A polyADP-ribosyl glutamic acid mark is found at glutamate 513 and glutamate 514. Serine 519 bears the ADP-ribosylserine mark. At glutamate 520 the chain carries PolyADP-ribosyl glutamic acid. Position 521 is an N6-(ADP-ribosyl)lysine (lysine 521). Lysine 528 participates in a covalent cross-link: Glycyl lysine isopeptide (Lys-Gly) (interchain with G-Cter in SUMO2). Residues 542-638 (SAHVLEKGGK…KNFTKYPKKF (97 aa)) enclose the WGR domain. Phosphothreonine; by PRKDC is present on threonine 594. N6-acetyllysine occurs at positions 600 and 621. Residues 662-779 (KSKLPKPVQD…DIEVAYSLLR (118 aa)) enclose the PARP alpha-helical domain. A Glycyl lysine isopeptide (Lys-Gly) (interchain with G-Cter in SUMO1); alternate cross-link involves residue lysine 748. A Glycyl lysine isopeptide (Lys-Gly) (interchain with G-Cter in SUMO2); alternate cross-link involves residue lysine 748. Phosphoserine is present on residues serine 782 and serine 786. Positions 788-1014 (DPIDVNYEKL…LKFNFKTSLW (227 aa)) constitute a PARP catalytic domain. NAD(+) contacts are provided by residues 862 to 864 (HGS), glycine 871, arginine 878, and serine 904. The For poly [ADP-ribose] polymerase activity role is filled by glutamate 988.

The protein belongs to the ARTD/PARP family. Homodimer; PARP-type zinc-fingers from separate PARP1 molecules form a dimer module that specifically recognizes DNA strand breaks. Heterodimer; heterodimerizes with PARP2. Interacts (via the PARP catalytic domain) with HPF1. Interacts with NMNAT1. Interacts with nucleosomes; with a preference for nucleosomes containing H2A.X. Interacts with APTX. Component of a base excision repair (BER) complex, containing at least XRCC1, PARP1, PARP2, POLB and LRIG3. Interacts with SRY. The SWAP complex consists of NPM1, NCL, PARP1 and SWAP70. Interacts with TIAM2. Interacts with PARP3; leading to activate PARP1 in absence of DNA. Interacts (when poly-ADP-ribosylated) with CHD1L (via macro domain). Interacts with the DNA polymerase alpha catalytic subunit POLA1; this interaction functions as part of the control of replication fork progression. Interacts with EEF1A1 and TXK. Interacts with RNF4. Interacts with RNF146. Interacts with ZNF423. Interacts with APLF. Interacts with SNAI1 (via zinc fingers); the interaction requires SNAI1 to be poly-ADP-ribosylated and non-phosphorylated (active) by GSK3B. Interacts (when poly-ADP-ribosylated) with PARP9. Interacts with NR4A3; activates PARP1 by improving acetylation of PARP1 and suppressing the interaction between PARP1 and SIRT1. Interacts (via catalytic domain) with PUM3; the interaction inhibits the poly-ADP-ribosylation activity of PARP1 and the degradation of PARP1 by CASP3 following genotoxic stress. Interacts with ZNF365. Interacts with RRP1B. Interacts with TIMELESS; the interaction is direct. Interacts with CGAS; leading to impede the formation of the PARP1-TIMELESS complex. Interacts with KHDC3L, the interaction is increased following the formation of DNA double-strand breaks. Interacts (when auto-poly-ADP-ribosylated) with XRCC1; leading to inhibit PARP1 ADP-ribosyltransferase activity. Interacts with SPINDOC; promoting PARP1 ADP-ribosyltransferase activity. Interacts with BANF1; leading to inhibit PARP1 ADP-ribosyltransferase activity in response to oxidative DNA damage. Interacts (when sumoylated and ubiquitinated) with VCP/p97; leading to its extraction from chromatin. Interacts with YARS1; Interacts with PACMP micropeptide; interaction. Interacts with PACMP micropeptide; Interacts with PACMP micropeptide; interaction. Interacts (when poly-ADP-ribosylated) with isoform 1 of MACROH2A1; MACROH2A1 specifically binds to poly-ADP-ribose chains and inhibits PARP1 activity, limiting the consumption of nuclear NAD(+). Interacts with CARM1; promoting recruitment to replication forks. Interacts with RECQL. Interacts with ZNF32; the interaction reshapes ZNF432 interacting proteins. Interacts with TPRN; TPRN interacts with a number of DNA damage response proteins, is recruited to sites of DNA damage and may play a role in DNA damage repair. As to quaternary structure, interacts (when auto-poly-ADP-ribosylated) with AIFM1. In terms of assembly, (Microbial infection) Interacts with human herpesvirus 8 (KSHV) protein RTA/ORF50; this interaction negatively regulates RTA/ORF50 transactivation activity. In terms of processing, poly-ADP-ribosylated on serine, glutamate and aspartate residues by autocatalysis. Auto-ADP-ribosylation on serine takes place following interaction with HPF1. Auto poly-ADP-ribosylation on serine residues promotes its dissociation from chromatin. Poly-ADP-ribosylated by PARP2; poly-ADP-ribosylation mediates the recruitment of CHD1L to DNA damage sites. Mono-ADP-ribosylated at Lys-521 by SIRT6 in response to oxidative stress, promoting recruitment to double-strand breaks (DSBs) sites. Post-translationally, phosphorylated at Thr-594 by PRKDC in response to DNA damage following virus infection, promoting its translocation to the cytosol. Phosphorylated by TXK. S-nitrosylated, leading to inhibit transcription regulation activity. In terms of processing, proteolytically cleaved by caspase-3 (CASP3) and caspase-7 (CASP7) in response to apoptosis to generate the Poly [ADP-ribose] polymerase 1, processed N-terminus and Poly [ADP-ribose] polymerase 1, processed C-terminus forms. CASP3-mediated cleavage is promoted by the TP53/p53-induced long non-coding RNA SPARCLE, which binds PARP1 in response to genotoxic stress. Post-translationally, sumoylated with SUMO1 or SUMO2 by PIAS4 following prolonged residence (trapping) to chromatin. Sumoylation promotes ubiquitination by RNF4 and removal from chromatin by VCP/p97. Ubiquitinated by RNF4 following sumoylation by PIAS4 in response to prolonged residence (trapping) to chromatin. Ubiquitination promotes removal from chromatin by VCP/p97.

It localises to the chromosome. The protein resides in the nucleus. The protein localises to the nucleolus. It is found in the cytoplasm. Its subcellular location is the cytosol. The catalysed reaction is NAD(+) + (ADP-D-ribosyl)n-acceptor = nicotinamide + (ADP-D-ribosyl)n+1-acceptor + H(+).. The enzyme catalyses L-seryl-[protein] + NAD(+) = O-(ADP-D-ribosyl)-L-seryl-[protein] + nicotinamide + H(+). It catalyses the reaction L-aspartyl-[protein] + NAD(+) = 4-O-(ADP-D-ribosyl)-L-aspartyl-[protein] + nicotinamide. It carries out the reaction L-glutamyl-[protein] + NAD(+) = 5-O-(ADP-D-ribosyl)-L-glutamyl-[protein] + nicotinamide. The catalysed reaction is L-tyrosyl-[protein] + NAD(+) = O-(ADP-D-ribosyl)-L-tyrosyl-[protein] + nicotinamide + H(+). The enzyme catalyses L-histidyl-[protein] + NAD(+) = N(tele)-(ADP-D-ribosyl)-L-histidyl-[protein] + nicotinamide + H(+). Its activity is regulated as follows. ADP-ribosyltransferase activity is regulated via an allosteric activation mechanism. In absence of activation signal, PARP1 is autoinhibited by the PARP alpha-helical domain (also named HD region), which prevents effective NAD(+)-binding. Activity is highly stimulated by signals, such as DNA strand breaks. Binding to damaged DNA unfolds the PARP alpha-helical domain, relieving autoinhibition. Poly-ADP-ribosyltransferase activity is tightly regulated and PARP1 is removed from damaged chromatin following initial poly-ADP-ribosylation of chromatin to avoid prolonged residence (trapping) that has cytotoxic consequences. A number of factors (VCP/p97) or post-translational modifications (auto-poly-ADP-ribosylation or ubiquitination) promote PARP1 removal from chromatin. ADP-ribosyltransferase activity is inhibited by a number of PARP inhibitors (PARPi) compounds, that are used the treatment of breast or ovarian cancers that have defects in DNA repair by homologous recombination. PARPi molecules can be classified in three categories: type I compounds (EB-47, UKTT15 and BAD) that promote allosteric retention of PARP1 on DNA, type II inhibitors (talazoparib and olaparib) that mediate a non-allosteric inhibition, and type III inhibitors (rucaparib, niraparib, and veliparib) that promote allosteric release from DNA. Trapping to chromatin by PARPi molecules triggers activation of the cGAS-STING pathway. Functionally, poly-ADP-ribosyltransferase that mediates poly-ADP-ribosylation of proteins and plays a key role in DNA repair. Mediates glutamate, aspartate, serine, histidine or tyrosine ADP-ribosylation of proteins: the ADP-D-ribosyl group of NAD(+) is transferred to the acceptor carboxyl group of target residues and further ADP-ribosyl groups are transferred to the 2'-position of the terminal adenosine moiety, building up a polymer with an average chain length of 20-30 units. Serine ADP-ribosylation of proteins constitutes the primary form of ADP-ribosylation of proteins in response to DNA damage. Specificity for the different amino acids is conferred by interacting factors, such as HPF1 and NMNAT1. Following interaction with HPF1, catalyzes serine ADP-ribosylation of target proteins; HPF1 confers serine specificity by completing the PARP1 active site. Also catalyzes tyrosine ADP-ribosylation of target proteins following interaction with HPF1. Following interaction with NMNAT1, catalyzes glutamate and aspartate ADP-ribosylation of target proteins; NMNAT1 confers glutamate and aspartate specificity. PARP1 initiates the repair of DNA breaks: recognizes and binds DNA breaks within chromatin and recruits HPF1, licensing serine ADP-ribosylation of target proteins, such as histones (H2BS6ADPr and H3S10ADPr), thereby promoting decompaction of chromatin and the recruitment of repair factors leading to the reparation of DNA strand breaks. HPF1 initiates serine ADP-ribosylation but restricts the polymerase activity of PARP1 in order to limit the length of poly-ADP-ribose chains. In addition to base excision repair (BER) pathway, also involved in double-strand breaks (DSBs) repair: together with TIMELESS, accumulates at DNA damage sites and promotes homologous recombination repair by mediating poly-ADP-ribosylation. Mediates the poly-ADP-ribosylation of a number of proteins, including itself, APLF, CHFR, RPA1 and NFAT5. In addition to proteins, also able to ADP-ribosylate DNA: catalyzes ADP-ribosylation of DNA strand break termini containing terminal phosphates and a 2'-OH group in single- and double-stranded DNA, respectively. Required for PARP9 and DTX3L recruitment to DNA damage sites. PARP1-dependent PARP9-DTX3L-mediated ubiquitination promotes the rapid and specific recruitment of 53BP1/TP53BP1, UIMC1/RAP80, and BRCA1 to DNA damage sites. PARP1-mediated DNA repair in neurons plays a role in sleep: senses DNA damage in neurons and promotes sleep, facilitating efficient DNA repair. In addition to DNA repair, also involved in other processes, such as transcription regulation, programmed cell death, membrane repair, adipogenesis and innate immunity. Acts as a repressor of transcription: binds to nucleosomes and modulates chromatin structure in a manner similar to histone H1, thereby altering RNA polymerase II. Acts both as a positive and negative regulator of transcription elongation, depending on the context. Acts as a positive regulator of transcription elongation by mediating poly-ADP-ribosylation of NELFE, preventing RNA-binding activity of NELFE and relieving transcription pausing. Acts as a negative regulator of transcription elongation in response to DNA damage by catalyzing poly-ADP-ribosylation of CCNT1, disrupting the phase separation activity of CCNT1 and subsequent activation of CDK9. Involved in replication fork progression following interaction with CARM1: mediates poly-ADP-ribosylation at replication forks, slowing fork progression. Poly-ADP-ribose chains generated by PARP1 also play a role in poly-ADP-ribose-dependent cell death, a process named parthanatos. Also acts as a negative regulator of the cGAS-STING pathway. Acts by mediating poly-ADP-ribosylation of CGAS: PARP1 translocates into the cytosol following phosphorylation by PRKDC and catalyzes poly-ADP-ribosylation and inactivation of CGAS. Acts as a negative regulator of adipogenesis: catalyzes poly-ADP-ribosylation of histone H2B on 'Glu-35' (H2BE35ADPr) following interaction with NMNAT1, inhibiting phosphorylation of H2B at 'Ser-36' (H2BS36ph), thereby blocking expression of pro-adipogenetic genes. Involved in the synthesis of ATP in the nucleus, together with NMNAT1, PARG and NUDT5. Nuclear ATP generation is required for extensive chromatin remodeling events that are energy-consuming. Its function is as follows. Promotes AIFM1-mediated apoptosis. This form, which translocates into the cytoplasm following cleavage by caspase-3 (CASP3) and caspase-7 (CASP7) in response to apoptosis, is auto-poly-ADP-ribosylated and serves as a poly-ADP-ribose carrier to induce AIFM1-mediated apoptosis. This cleavage form irreversibly binds to DNA breaks and interferes with DNA repair, promoting DNA damage-induced apoptosis. This chain is Poly [ADP-ribose] polymerase 1, found in Homo sapiens (Human).